The chain runs to 502 residues: UDP-N-acetylglucosamine diphosphorylase 2 (502 aa).

Residues 130–133 (LSGG) carry the Substrate binding motif. A substrate-binding site is contributed by Asn250. The Substrate binding signature appears at 332-333 (EY). Lys429 serves as a coordination point for substrate.

The protein belongs to the UDPGP type 1 family. As to quaternary structure, monomer. The cofactor is Mg(2+). It depends on Mn(2+) as a cofactor. In terms of tissue distribution, expressed in root tips, stipules, lateral root primordia, immature anthers and at the branching points of the flowering shoots.

The protein localises to the cytoplasm. The enzyme catalyses N-acetyl-alpha-D-glucosamine 1-phosphate + UTP + H(+) = UDP-N-acetyl-alpha-D-glucosamine + diphosphate. It catalyses the reaction N-acetyl-alpha-D-galactosamine 1-phosphate + UTP + H(+) = UDP-N-acetyl-alpha-D-galactosamine + diphosphate. The catalysed reaction is alpha-D-glucose 1-phosphate + UTP + H(+) = UDP-alpha-D-glucose + diphosphate. The protein operates within nucleotide-sugar biosynthesis; UDP-N-acetyl-alpha-D-glucosamine biosynthesis; UDP-N-acetyl-alpha-D-glucosamine from N-acetyl-alpha-D-glucosamine 1-phosphate: step 1/1. Functionally, uridylyltransferase involved in the biosynthesis of UDP-glucosamine, an essential precursor for glycoprotein and glycolipid synthesis. Can use UDP-glucosamine, the 4-epimer UDP-galactosamine and UDP-glucose as substrates. Acts redundantly with GLCNAC1PUT1. Required for gametogenesis and embryo development. This Arabidopsis thaliana (Mouse-ear cress) protein is UDP-N-acetylglucosamine diphosphorylase 2 (GLCNAC1PUT2).